The chain runs to 274 residues: Bis(5'-nucleosyl)-tetraphosphatase, symmetrical (274 aa).

The protein belongs to the Ap4A hydrolase family.

The catalysed reaction is P(1),P(4)-bis(5'-adenosyl) tetraphosphate + H2O = 2 ADP + 2 H(+). Functionally, hydrolyzes diadenosine 5',5'''-P1,P4-tetraphosphate to yield ADP. The protein is Bis(5'-nucleosyl)-tetraphosphatase, symmetrical of Shewanella loihica (strain ATCC BAA-1088 / PV-4).